Here is a 392-residue protein sequence, read N- to C-terminus: MYVHHLFLRDFRNYRRLDLALAPATTLFYGPNAAGKTSLLEAIFYLATTRSPRLSSDRELVRWDAVGEAGTPPFARIAADVERRIGPVRLEVLVQRRADDDGQPLNGAQKLVRIDKRPARAIDLIGQLRVVLFTPTDLTLVDGPPAERRRYLDITLSQLDPHYVRTLAHYQKILLQRNSLLRAWREQRRVPRHVDAELAYWDQELAAAGGYLLAERLRAIVELNDLAGPLYQEMSGGEDRLQIEYAASCDLGTARDAGGLAERLLLAFAAQRSDELARGQTLCGPHRDDLIFTVAGINLGRYGSRGQQRSIALALKIGEAGLMRRRSGEAPVLLLDDVLSELDAQRRAHLLALIHHPDQQTLLTATDLSDFSADFLAAVRRYRVEDGQVFAG.

30-37 (GPNAAGKT) is an ATP binding site.

This sequence belongs to the RecF family.

The protein localises to the cytoplasm. In terms of biological role, the RecF protein is involved in DNA metabolism; it is required for DNA replication and normal SOS inducibility. RecF binds preferentially to single-stranded, linear DNA. It also seems to bind ATP. This Chloroflexus aurantiacus (strain ATCC 29364 / DSM 637 / Y-400-fl) protein is DNA replication and repair protein RecF.